Consider the following 311-residue polypeptide: Acetyl-coenzyme A carboxylase carboxyl transferase subunit alpha (311 aa).

The CoA carboxyltransferase C-terminal domain maps to 36-286 (NLSKEISKVY…ANYFISELAE (251 aa)).

The protein belongs to the AccA family. In terms of assembly, acetyl-CoA carboxylase is a heterohexamer composed of biotin carboxyl carrier protein (AccB), biotin carboxylase (AccC) and two subunits each of ACCase subunit alpha (AccA) and ACCase subunit beta (AccD).

It is found in the cytoplasm. It catalyses the reaction N(6)-carboxybiotinyl-L-lysyl-[protein] + acetyl-CoA = N(6)-biotinyl-L-lysyl-[protein] + malonyl-CoA. Its pathway is lipid metabolism; malonyl-CoA biosynthesis; malonyl-CoA from acetyl-CoA: step 1/1. In terms of biological role, component of the acetyl coenzyme A carboxylase (ACC) complex. First, biotin carboxylase catalyzes the carboxylation of biotin on its carrier protein (BCCP) and then the CO(2) group is transferred by the carboxyltransferase to acetyl-CoA to form malonyl-CoA. The protein is Acetyl-coenzyme A carboxylase carboxyl transferase subunit alpha of Campylobacter concisus (strain 13826).